The sequence spans 201 residues: MNNIQSLDKLTQIISRLPGIGTRTAMRLALYLFDCDDEYLKEFSDVLSSLHENIKLCQVCYSLSDNDICDICSNDKREHNKICIVESYPDMLAIEKTEEYNGVYHILGGLISPLKGIGISDIRIKELIERVNNNSIEEIMIAFSASLEADTTASYIYKTLKDNNFNGRITRITYGISLASDIENADSRSLARSILDRVDMN.

The segment at 57-72 adopts a C4-type zinc-finger fold; it reads CQVCYSLSDNDICDIC. A Toprim domain is found at 80-177; sequence NKICIVESYP…RITRITYGIS (98 aa).

It belongs to the RecR family.

Its function is as follows. May play a role in DNA repair. It seems to be involved in an RecBC-independent recombinational process of DNA repair. It may act with RecF and RecO. The sequence is that of Recombination protein RecR from Brachyspira hyodysenteriae (strain ATCC 49526 / WA1).